A 2560-amino-acid polypeptide reads, in one-letter code: Plipastatin synthase subunit B (2560 aa).

The interval 7–310 (IQDIYPLSHM…NTVPVRIRSA (304 aa)) is condensation 1. The interval 7–1042 (IQDIYPLSHM…AVKLMSLKEH (1036 aa)) is domain 1 (tyrosine-activating). Residues 496–889 (TYRQLQVRAN…QAPGVKEAAV (394 aa)) are adenylation 1. In terms of domain architecture, Carrier 1 spans 965 to 1040 (APRTLIEADL…SMAVKLMSLK (76 aa)). At serine 1000 the chain carries O-(pantetheine 4'-phosphoryl)serine. Positions 1052-1342 (QRDVYPLSFS…NTLAMRSKPE (291 aa)) are condensation 2. The interval 1052-2553 (QRDVYPLSFS…DLTLDELSEI (1502 aa)) is domain 2 (D-allo-threonine-activating). An adenylation 2 region spans residues 1527-1927 (TYRDLNEKAE…QYPMIKEAAV (401 aa)). The 75-residue stretch at 2006-2080 (SPRNEIETVM…ELSARVRKDV (75 aa)) folds into the Carrier 2 domain. Serine 2041 is subject to O-(pantetheine 4'-phosphoryl)serine. Residues 2088–2553 (VEGEITWTPI…DLTLDELSEI (466 aa)) form an epimerization region.

It belongs to the ATP-dependent AMP-binding enzyme family. Pantetheine 4'-phosphate serves as cofactor.

In terms of biological role, this protein is a multifunctional enzyme, able to activate and polymerize the amino acids Tyr and Thr as part of the biosynthesis of the lipopeptide antibiotic plipastatin. The Thr residue is further converted to the D-allo-isomer form. The activation sites for these amino acids consist of individual domains. The sequence is that of Plipastatin synthase subunit B (ppsB) from Bacillus subtilis (strain 168).